A 366-amino-acid chain; its full sequence is Galactoside alpha-(1,2)-fucosyltransferase 1 (366 aa).

Residues 1-8 lie on the Cytoplasmic side of the membrane; that stretch reads MWPLSHRH. A helical; Signal-anchor for type II membrane protein membrane pass occupies residues 9–25; it reads LCLAFLLVCVLSAISFF. Residues 26-366 lie on the Lumenal side of the membrane; it reads LHIHQDSFRH…LSPLWTLAEP (341 aa). N-linked (GlcNAc...) asparagine glycosylation is found at Asn66, Asn302, and Asn328.

The protein belongs to the glycosyltransferase 11 family.

It is found in the golgi apparatus. The protein resides in the golgi stack membrane. The enzyme catalyses a beta-D-galactosyl-(1-&gt;4)-N-acetyl-beta-D-glucosaminyl derivative + GDP-beta-L-fucose = an alpha-L-Fuc-(1-&gt;2)-beta-D-Gal-(1-&gt;4)-beta-D-GlcNAc derivative + GDP + H(+). The catalysed reaction is a ganglioside GA1 + GDP-beta-L-fucose = a ganglioside Fuc-GA1 + GDP + H(+). It catalyses the reaction a beta-D-Gal-(1-&gt;3)-beta-D-GlcNAc-(1-&gt;3)-beta-D-Gal-(1-&gt;4)-beta-D-Glc-(1&lt;-&gt;1')-Cer(d18:1(4E)) + GDP-beta-L-fucose = alpha-L-fucosyl-(1-&gt;2)- beta-D-galactosyl-(1-&gt;3)-N-acetyl-beta-D-glucosaminyl-(1-&gt;3)-beta-D-galactosyl-(1-&gt;4)-beta-D-glucosyl-(1&lt;-&gt;1')-N-acylsphing-4-enine + GDP + H(+). It carries out the reaction a neolactoside nLc4Cer(d18:1(4E)) + GDP-beta-L-fucose = a neolactoside IV(2)-alpha-Fuc-nLc4Cer(d18:1(4E)) + GDP + H(+). The enzyme catalyses a ganglioside GM1 + GDP-beta-L-fucose = a ganglioside Fuc-GM1 + GDP + H(+). The catalysed reaction is beta-D-galactosyl-(1-&gt;3)-N-acetyl-D-galactosamine + GDP-beta-L-fucose = alpha-L-fucosyl-(1-&gt;2)-beta-D-galactosyl-(1-&gt;3)-N-acetyl-D-galactosamine + GDP + H(+). It participates in protein modification; protein glycosylation. In terms of biological role, catalyzes the transfer of L-fucose, from a guanosine diphosphate-beta-L-fucose, to the terminal galactose residue of glycoconjugates through an alpha(1,2) linkage leading to H antigen synthesis that is an intermediate substrate in the synthesis of ABO blood group antigens. H antigen is essential for maturation of the glomerular layer of the main olfactory bulb, in cell migration and early cell-cell contacts during tumor associated angiogenesis. Preferentially fucosylates soluble lactose and to a lesser extent fucosylates glycolipids gangliosides GA1 and GM1a. This Plecturocebus brunneus (Brown titi monkey) protein is Galactoside alpha-(1,2)-fucosyltransferase 1.